Here is a 449-residue protein sequence, read N- to C-terminus: Probable glycine dehydrogenase (decarboxylating) subunit 1 (449 aa).

This sequence belongs to the GcvP family. N-terminal subunit subfamily. As to quaternary structure, the glycine cleavage system is composed of four proteins: P, T, L and H. In this organism, the P 'protein' is a heterodimer of two subunits.

It carries out the reaction N(6)-[(R)-lipoyl]-L-lysyl-[glycine-cleavage complex H protein] + glycine + H(+) = N(6)-[(R)-S(8)-aminomethyldihydrolipoyl]-L-lysyl-[glycine-cleavage complex H protein] + CO2. The glycine cleavage system catalyzes the degradation of glycine. The P protein binds the alpha-amino group of glycine through its pyridoxal phosphate cofactor; CO(2) is released and the remaining methylamine moiety is then transferred to the lipoamide cofactor of the H protein. The polypeptide is Probable glycine dehydrogenase (decarboxylating) subunit 1 (Solibacter usitatus (strain Ellin6076)).